A 1099-amino-acid polypeptide reads, in one-letter code: Carbamoyl phosphate synthase large chain (1099 aa).

The carboxyphosphate synthetic domain stretch occupies residues 1–402 (MPKREDIKRI…ALGKALRSLE (402 aa)). Positions 129, 169, 175, 176, 208, 210, 215, 241, 242, 243, 285, and 299 each coordinate ATP. In terms of domain architecture, ATP-grasp 1 spans 133 to 328 (KETMEKAGLE…IAKVAALLAV (196 aa)). 3 residues coordinate Mg(2+): Gln285, Glu299, and Asn301. Residues Gln285, Glu299, and Asn301 each contribute to the Mn(2+) site. Residues 403 to 541 (LDAAPKLDLE…STYNGVENEA (139 aa)) form an oligomerization domain region. Positions 542-944 (VPSDREKIMI…AFAKAQIAAG (403 aa)) are carbamoyl phosphate synthetic domain. Residues 666–857 (AKLLKQIGLK…VARIAAKIMV (192 aa)) form the ATP-grasp 2 domain. Positions 702, 741, 743, 748, 773, 774, 775, 776, 816, and 828 each coordinate ATP. Positions 816, 828, and 830 each coordinate Mg(2+). Positions 816, 828, and 830 each coordinate Mn(2+). In terms of domain architecture, MGS-like spans 945–1099 (NPLPTTGAIL…VRRLTDTWKM (155 aa)). The allosteric domain stretch occupies residues 945 to 1099 (NPLPTTGAIL…VRRLTDTWKM (155 aa)).

Belongs to the CarB family. As to quaternary structure, composed of two chains; the small (or glutamine) chain promotes the hydrolysis of glutamine to ammonia, which is used by the large (or ammonia) chain to synthesize carbamoyl phosphate. Tetramer of heterodimers (alpha,beta)4. Requires Mg(2+) as cofactor. It depends on Mn(2+) as a cofactor.

The catalysed reaction is hydrogencarbonate + L-glutamine + 2 ATP + H2O = carbamoyl phosphate + L-glutamate + 2 ADP + phosphate + 2 H(+). It catalyses the reaction hydrogencarbonate + NH4(+) + 2 ATP = carbamoyl phosphate + 2 ADP + phosphate + 2 H(+). The protein operates within amino-acid biosynthesis; L-arginine biosynthesis; carbamoyl phosphate from bicarbonate: step 1/1. It participates in pyrimidine metabolism; UMP biosynthesis via de novo pathway; (S)-dihydroorotate from bicarbonate: step 1/3. Large subunit of the glutamine-dependent carbamoyl phosphate synthetase (CPSase). CPSase catalyzes the formation of carbamoyl phosphate from the ammonia moiety of glutamine, carbonate, and phosphate donated by ATP, constituting the first step of 2 biosynthetic pathways, one leading to arginine and/or urea and the other to pyrimidine nucleotides. The large subunit (synthetase) binds the substrates ammonia (free or transferred from glutamine from the small subunit), hydrogencarbonate and ATP and carries out an ATP-coupled ligase reaction, activating hydrogencarbonate by forming carboxy phosphate which reacts with ammonia to form carbamoyl phosphate. The protein is Carbamoyl phosphate synthase large chain of Thermotoga maritima (strain ATCC 43589 / DSM 3109 / JCM 10099 / NBRC 100826 / MSB8).